Here is a 294-residue protein sequence, read N- to C-terminus: tRNA dimethylallyltransferase (294 aa).

An ATP-binding site is contributed by 10–17; sequence GPTAVGKT. 12–17 is a binding site for substrate; the sequence is TAVGKT. Positions 35–38 are interaction with substrate tRNA; it reads DSQQ.

It belongs to the IPP transferase family. In terms of assembly, monomer. Mg(2+) is required as a cofactor.

It catalyses the reaction adenosine(37) in tRNA + dimethylallyl diphosphate = N(6)-dimethylallyladenosine(37) in tRNA + diphosphate. Catalyzes the transfer of a dimethylallyl group onto the adenine at position 37 in tRNAs that read codons beginning with uridine, leading to the formation of N6-(dimethylallyl)adenosine (i(6)A). In Streptococcus suis (strain 05ZYH33), this protein is tRNA dimethylallyltransferase.